A 390-amino-acid chain; its full sequence is S-adenosylmethionine synthase 2 (390 aa).

Glu-9 serves as a coordination point for Mg(2+). His-15 contributes to the ATP binding site. Glu-43 contributes to the K(+) binding site. 2 residues coordinate L-methionine: Glu-56 and Gln-99. ATP-binding positions include 167–169 (DGK), 235–238 (SGRF), Asp-246, 252–253 (RK), Ala-269, Lys-273, and Lys-277. Asp-246 provides a ligand contact to L-methionine. Lys-277 serves as a coordination point for L-methionine.

The protein belongs to the AdoMet synthase family. Homotetramer. The cofactor is Mn(2+). Requires Mg(2+) as cofactor. Co(2+) is required as a cofactor. It depends on K(+) as a cofactor.

Its subcellular location is the cytoplasm. The enzyme catalyses L-methionine + ATP + H2O = S-adenosyl-L-methionine + phosphate + diphosphate. It functions in the pathway amino-acid biosynthesis; S-adenosyl-L-methionine biosynthesis; S-adenosyl-L-methionine from L-methionine: step 1/1. In terms of biological role, catalyzes the formation of S-adenosylmethionine from methionine and ATP. The reaction comprises two steps that are both catalyzed by the same enzyme: formation of S-adenosylmethionine (AdoMet) and triphosphate, and subsequent hydrolysis of the triphosphate. The sequence is that of S-adenosylmethionine synthase 2 (SAM2) from Petunia hybrida (Petunia).